The primary structure comprises 231 residues: UPF0173 metal-dependent hydrolase AF_1265 (231 aa).

Belongs to the UPF0173 family.

The protein is UPF0173 metal-dependent hydrolase AF_1265 of Archaeoglobus fulgidus (strain ATCC 49558 / DSM 4304 / JCM 9628 / NBRC 100126 / VC-16).